We begin with the raw amino-acid sequence, 86 residues long: Putative membrane protein insertion efficiency factor (86 aa).

The protein belongs to the UPF0161 family.

The protein resides in the cell inner membrane. Could be involved in insertion of integral membrane proteins into the membrane. The sequence is that of Putative membrane protein insertion efficiency factor from Haemophilus influenzae (strain 86-028NP).